We begin with the raw amino-acid sequence, 219 residues long: Urease accessory protein UreG (219 aa).

The segment at 1 to 20 (MSALHSIPHRSKKLPPLRVG) is disordered. 23–30 (GPVGSGKT) contacts GTP.

Belongs to the SIMIBI class G3E GTPase family. UreG subfamily. As to quaternary structure, homodimer. UreD, UreF and UreG form a complex that acts as a GTP-hydrolysis-dependent molecular chaperone, activating the urease apoprotein by helping to assemble the nickel containing metallocenter of UreC. The UreE protein probably delivers the nickel.

It is found in the cytoplasm. In terms of biological role, facilitates the functional incorporation of the urease nickel metallocenter. This process requires GTP hydrolysis, probably effectuated by UreG. This chain is Urease accessory protein UreG, found in Methylibium petroleiphilum (strain ATCC BAA-1232 / LMG 22953 / PM1).